We begin with the raw amino-acid sequence, 383 residues long: Succinyl-diaminopimelate desuccinylase (383 aa).

A Zn(2+)-binding site is contributed by His72. Residue Asp74 is part of the active site. Zn(2+) is bound at residue Asp105. The active-site Proton acceptor is the Glu139. The Zn(2+) site is built by Glu140, Glu168, and His356.

This sequence belongs to the peptidase M20A family. DapE subfamily. In terms of assembly, homodimer. The cofactor is Zn(2+). It depends on Co(2+) as a cofactor.

It catalyses the reaction N-succinyl-(2S,6S)-2,6-diaminopimelate + H2O = (2S,6S)-2,6-diaminopimelate + succinate. It participates in amino-acid biosynthesis; L-lysine biosynthesis via DAP pathway; LL-2,6-diaminopimelate from (S)-tetrahydrodipicolinate (succinylase route): step 3/3. Functionally, catalyzes the hydrolysis of N-succinyl-L,L-diaminopimelic acid (SDAP), forming succinate and LL-2,6-diaminopimelate (DAP), an intermediate involved in the bacterial biosynthesis of lysine and meso-diaminopimelic acid, an essential component of bacterial cell walls. The sequence is that of Succinyl-diaminopimelate desuccinylase from Beijerinckia indica subsp. indica (strain ATCC 9039 / DSM 1715 / NCIMB 8712).